The chain runs to 696 residues: MARTHKLEDVRNIGIAAHIDAGKTTTTERILFYTGVEHKIGEVHDGAATMDWMEQEQERGITITSAATTCEWLGKQINIIDTPGHVDFTIEVERSMRVLDGAVSVFCAVGGVQPQSETVWRQRNRYGVPSLVFVNKMDRTGADFLEVERQIRDRLKGNPLVIQLPIGAEENFEGVVDLVKMKEIVWDADAEMGSAYHEQDIRPELQEQAEAFREKLIEGISEVDGNEELMEKYMEGEELTTEEIMAGIKAATIHMHVVPMLPGTAFKNKGVQTLLDAVVHYLPSPVEAPPIKGTKMEDEDVEVVVESTDDGEFASLAFKIMTDPFVGQLTFIRVYRGSLESGSYVLNSTKEKKERVGRIMKMHAIKREEISEIYAGEIGAVVGLKNTTTGDTLCSDKDKVVLERMDFPDPVISVAVEPKTKADQEKMGIALSKLAAEDPSFRVNTDEESGQTIISGMGELHLEILVDRMKREFKVEAEVGAPQVAYRETIRKAVNKEYKYAKQSGGRGQYGHVFLKIEPQEPGFGYEFVDAVKGGVVPKEFIQPVNKGVQEAMARGIQAGYPVEDVKVTLYDGSYHDVDSSEMAFKLAGSMGFRDGCREANPVILEPMMKVEVEVPEEFMGDVIGDVAKRRGQVSGMDDRAGNKIVNAFVPLSEMFGYSTDLRSMTQGRATYAMEFDHYEEVPQNVAKEIIEKRNS.

In terms of domain architecture, tr-type G spans 8–286; it reads EDVRNIGIAA…AVVHYLPSPV (279 aa). GTP contacts are provided by residues 17 to 24, 81 to 85, and 135 to 138; these read AHIDAGKT, DTPGH, and NKMD.

It belongs to the TRAFAC class translation factor GTPase superfamily. Classic translation factor GTPase family. EF-G/EF-2 subfamily.

It localises to the cytoplasm. Catalyzes the GTP-dependent ribosomal translocation step during translation elongation. During this step, the ribosome changes from the pre-translocational (PRE) to the post-translocational (POST) state as the newly formed A-site-bound peptidyl-tRNA and P-site-bound deacylated tRNA move to the P and E sites, respectively. Catalyzes the coordinated movement of the two tRNA molecules, the mRNA and conformational changes in the ribosome. The chain is Elongation factor G from Sulfurovum sp. (strain NBC37-1).